The sequence spans 557 residues: Urocanate hydratase (557 aa).

Residues 1–20 (MSNPRHNEREVRSPRGDELN) form a disordered region. Residues 52–53 (GG), glutamine 130, 176–178 (GMG), glutamate 196, arginine 201, 242–243 (NA), 263–267 (QTSAH), 273–274 (YL), and tyrosine 322 contribute to the NAD(+) site. Cysteine 410 is a catalytic residue. Glycine 492 contacts NAD(+).

This sequence belongs to the urocanase family. NAD(+) is required as a cofactor.

The protein localises to the cytoplasm. It catalyses the reaction 4-imidazolone-5-propanoate = trans-urocanate + H2O. It functions in the pathway amino-acid degradation; L-histidine degradation into L-glutamate; N-formimidoyl-L-glutamate from L-histidine: step 2/3. Its function is as follows. Catalyzes the conversion of urocanate to 4-imidazolone-5-propionate. This Brucella canis (strain ATCC 23365 / NCTC 10854 / RM-666) protein is Urocanate hydratase.